A 375-amino-acid chain; its full sequence is MQKIVVYVYIYLFVQISVDPVALDGSSQPTENTEKDGLCNACTWRQNTKSSRIEAIKIQILSKLRLEQAPNISRDVIKQLLPKAPPLQELIDQYDVQRDDSSDGSLEDDDYHATTETIITMPTESDFLVQMEGKPKCCFFKFSSKIQYNKVVKAQLWIYLRQVQKPTTVFVQILRLIKPMKDGTRYTGIRSLKLDMNPGNGIWQSIDVKTVLQNWLKQPESNLGIEIKAFDENGRDLAVTFPGPGEDGLNPFLEVRVTDTPKRSRRDFGLDCDEHSTESRCCRYPLTVDFEAFGWDWIIAPKRYKANYCSGECEFVFLQKYPHTHLVHQANPRGSAGPCCTPTKMSPINMLYFNGKEQIIYGKIPAMVVDRCGCS.

A signal peptide spans 1 to 23 (MQKIVVYVYIYLFVQISVDPVAL). Positions 24-266 (DGSSQPTENT…VTDTPKRSRR (243 aa)) are excised as a propeptide. Asn71 is a glycosylation site (N-linked (GlcNAc...) asparagine). 4 disulfide bridges follow: Cys272–Cys282, Cys281–Cys340, Cys309–Cys372, and Cys313–Cys374.

Belongs to the TGF-beta family. Homodimer; disulfide-linked.

The protein resides in the secreted. Its function is as follows. Acts specifically as a negative regulator of skeletal muscle growth. This is Growth/differentiation factor 8 (MSTN) from Coturnix coturnix (Common quail).